We begin with the raw amino-acid sequence, 115 residues long: Non-specific lipid-transfer protein 4.1 (115 aa).

Residues 1-25 (MARAAASQLVLVALVAAMLLVAADA) form the signal peptide. Disulfide bonds link Cys29–Cys77, Cys39–Cys54, Cys55–Cys97, and Cys75–Cys111.

It belongs to the plant LTP family.

Plant non-specific lipid-transfer proteins transfer phospholipids as well as galactolipids across membranes. May play a role in wax or cutin deposition in the cell walls of expanding epidermal cells and certain secretory tissues. This Hordeum vulgare (Barley) protein is Non-specific lipid-transfer protein 4.1 (LTP4.1).